Reading from the N-terminus, the 296-residue chain is Glycine--tRNA ligase alpha subunit (296 aa).

This sequence belongs to the class-II aminoacyl-tRNA synthetase family. In terms of assembly, tetramer of two alpha and two beta subunits.

The protein resides in the cytoplasm. The catalysed reaction is tRNA(Gly) + glycine + ATP = glycyl-tRNA(Gly) + AMP + diphosphate. The chain is Glycine--tRNA ligase alpha subunit from Francisella tularensis subsp. novicida (strain U112).